A 318-amino-acid chain; its full sequence is Ornithine carbamoyltransferase (318 aa).

Carbamoyl phosphate-binding positions include 63–66 (STRT), glutamine 90, arginine 114, and 141–144 (HPCQ). Residues asparagine 172, aspartate 235, and 239–240 (SM) contribute to the L-ornithine site. Carbamoyl phosphate-binding positions include 275–276 (CL) and arginine 303.

It belongs to the aspartate/ornithine carbamoyltransferase superfamily. OTCase family.

It is found in the cytoplasm. The catalysed reaction is carbamoyl phosphate + L-ornithine = L-citrulline + phosphate + H(+). The protein operates within amino-acid biosynthesis; L-arginine biosynthesis; L-arginine from L-ornithine and carbamoyl phosphate: step 1/3. Reversibly catalyzes the transfer of the carbamoyl group from carbamoyl phosphate (CP) to the N(epsilon) atom of ornithine (ORN) to produce L-citrulline. The chain is Ornithine carbamoyltransferase from Parasynechococcus marenigrum (strain WH8102).